Here is a 320-residue protein sequence, read N- to C-terminus: Lipoyl synthase (320 aa).

Residues 1–29 form a disordered region; the sequence is MVTVVDRVTNRRLRHPEKAHRPDTSVQKK. Residues 19–29 show a composition bias toward basic and acidic residues; that stretch reads AHRPDTSVQKK. Residues C59, C64, C70, C85, C89, C92, and S298 each contribute to the [4Fe-4S] cluster site. Positions 71–287 constitute a Radical SAM core domain; that stretch reads WSQRHASFMI…AKIGKVKGFL (217 aa).

It belongs to the radical SAM superfamily. Lipoyl synthase family. Requires [4Fe-4S] cluster as cofactor.

It localises to the cytoplasm. It catalyses the reaction [[Fe-S] cluster scaffold protein carrying a second [4Fe-4S](2+) cluster] + N(6)-octanoyl-L-lysyl-[protein] + 2 oxidized [2Fe-2S]-[ferredoxin] + 2 S-adenosyl-L-methionine + 4 H(+) = [[Fe-S] cluster scaffold protein] + N(6)-[(R)-dihydrolipoyl]-L-lysyl-[protein] + 4 Fe(3+) + 2 hydrogen sulfide + 2 5'-deoxyadenosine + 2 L-methionine + 2 reduced [2Fe-2S]-[ferredoxin]. Its pathway is protein modification; protein lipoylation via endogenous pathway; protein N(6)-(lipoyl)lysine from octanoyl-[acyl-carrier-protein]: step 2/2. Catalyzes the radical-mediated insertion of two sulfur atoms into the C-6 and C-8 positions of the octanoyl moiety bound to the lipoyl domains of lipoate-dependent enzymes, thereby converting the octanoylated domains into lipoylated derivatives. The protein is Lipoyl synthase of Bartonella tribocorum (strain CIP 105476 / IBS 506).